We begin with the raw amino-acid sequence, 86 residues long: Large ribosomal subunit protein uL23 (86 aa).

Belongs to the universal ribosomal protein uL23 family. As to quaternary structure, part of the 50S ribosomal subunit. Contacts protein L29.

Functionally, binds to 23S rRNA. One of the proteins that surrounds the polypeptide exit tunnel on the outside of the ribosome. This chain is Large ribosomal subunit protein uL23, found in Thermococcus kodakarensis (strain ATCC BAA-918 / JCM 12380 / KOD1) (Pyrococcus kodakaraensis (strain KOD1)).